We begin with the raw amino-acid sequence, 623 residues long: Sodium-coupled monocarboxylate transporter 2 (623 aa).

Residues 1 to 10 (METVGRFQAG) are Extracellular-facing. The helical transmembrane segment at 11–31 (DYVVFACLFVVSSGIGVFFAI) threads the bilayer. Residues 32–50 (KERNKAPSKEFLVGGRQMS) are Cytoplasmic-facing. Residues 51–71 (CGPVALSLTASFMSAVTVIGA) traverse the membrane as a helical segment. Residues 72-83 (PADVYRFGASYV) lie on the Extracellular side of the membrane. A helical membrane pass occupies residues 84–104 (IFGVAYTFVVFFTAELFLPVF). The Cytoplasmic segment spans residues 105-129 (YRSGITSTYEYLELRFCKLVRVAAT). A helical membrane pass occupies residues 130–150 (LIYIIQTILYTGVVVYAPALA). The Extracellular portion of the chain corresponds to 151–158 (LNQVTGFD). The helical transmembrane segment at 159-179 (LWGSIFATGIVCTFYCTLGGL) threads the bilayer. The Cytoplasmic segment spans residues 180-181 (KA). Residues 182–202 (VVWTDAFQMVVMVVGFLTVLI) traverse the membrane as a helical segment. The Extracellular segment spans residues 203-236 (QGSSRAGGIENVWSTSRTGGRLQVFDFDVSPLRR). A helical transmembrane segment spans residues 237–257 (HTFWTLSVGGTFTWLGIYGVN). The Cytoplasmic portion of the chain corresponds to 258–276 (QSTIQRCISCKTEGHARWA). The chain crosses the membrane as a helical span at residues 277–297 (LYLNLLGLWIILFCAVVSGLI). Topologically, residues 298–322 (MYSYYSHCDPWSSGLISAPDQLMPY) are extracellular. The helical transmembrane segment at 323–343 (FVMEILGAFPGLPGLFVACAF) threads the bilayer. Over 344 to 386 (SGTLSTVAASINALATVMYEDFVSQCFPDLSNRAASWISKALC) the chain is Cytoplasmic. Residues 387 to 407 (VAFGVACTTMAVAASYMGGIV) form a helical membrane-spanning segment. Over 408–412 (QAALS) the chain is Extracellular. Residues 413-433 (IHGMCGGPVLGLFSLGILFPF) form a helical membrane-spanning segment. Over 434–438 (TNLKG) the chain is Cytoplasmic. A helical membrane pass occupies residues 439–459 (AVGGLIVGISLSFWVGVGAFI). At 460-510 (YPAPSNNTHALELNTAGCNITAAAFEPTSATVTQLTSDRNWLADSWYSMSY) the chain is on the extracellular side. N-linked (GlcNAc...) asparagine glycosylation is found at Asn465 and Asn478. The helical transmembrane segment at 511–531 (LYYSAVGFIGTVAAGLLITLL) threads the bilayer. Residues 532–623 (TGPMDPKLLK…NETSIVQKKL (92 aa)) are Cytoplasmic-facing.

It belongs to the sodium:solute symporter (SSF) (TC 2.A.21) family.

The protein localises to the apical cell membrane. The catalysed reaction is (S)-lactate(out) + Na(+)(out) = (S)-lactate(in) + Na(+)(in). It carries out the reaction nicotinate(out) + Na(+)(out) = nicotinate(in) + Na(+)(in). It catalyses the reaction pyruvate(out) + Na(+)(out) = pyruvate(in) + Na(+)(in). The enzyme catalyses propanoate(out) + Na(+)(out) = propanoate(in) + Na(+)(in). The catalysed reaction is butanoate(out) + Na(+)(out) = butanoate(in) + Na(+)(in). It carries out the reaction acetoacetate(out) + Na(+)(out) = acetoacetate(in) + Na(+)(in). Its function is as follows. Acts as an electroneutral and low-affinity sodium (Na(+))-dependent sodium-coupled solute transporter. Catalyzes the transport across the plasma membrane of many monocarboxylates such as lactate, pyruvate, nicotinate, propionate, butyrate and beta-D-hydroxybutyrate. The sequence is that of Sodium-coupled monocarboxylate transporter 2 (slc5a12) from Danio rerio (Zebrafish).